The following is a 231-amino-acid chain: Achaete-scute homolog 1 (231 aa).

2 disordered regions span residues 1–24 (MESSGKMESGAGQQPQPPQPFLPP) and 39–92 (AAAA…PELM). Residues 39–51 (AAAAAQSAQQQQP) are compositionally biased toward low complexity. Over residues 76–85 (SAAKQVKRQR) the composition is skewed to basic residues. The bHLH domain occupies 113 to 165 (AAVARRNERERNRVKLVNLGFATLREHVPNGAANKKMSKVETLRSAVEYIRAL). K151 carries the post-translational modification N6-acetyllysine.

In terms of assembly, efficient DNA binding requires dimerization with another bHLH protein. Forms a heterodimer with TCF3. In terms of tissue distribution, developing CNS and PNS at embryonic and postnatal stages. Expressed in the epithelium of glandular stomach.

It localises to the nucleus. Transcription factor that plays a key role in neuronal differentiation: acts as a pioneer transcription factor, accessing closed chromatin to allow other factors to bind and activate neural pathways. Directly binds the E box motif (5'-CANNTG-3') on promoters and promotes transcription of neuronal genes. The combination of three transcription factors, ASCL1, POU3F2/BRN2 and MYT1L, is sufficient to reprogram fibroblasts and other somatic cells into induced neuronal (iN) cells in vitro. Plays a role at early stages of development of specific neural lineages in most regions of the CNS, and of several lineages in the PNS. Essential for the generation of olfactory and autonomic neurons. Acts synergistically with FOXN4 to specify the identity of V2b neurons rather than V2a from bipotential p2 progenitors during spinal cord neurogenesis, probably through DLL4-NOTCH signaling activation. Involved in the regulation of neuroendocrine cell development in the glandular stomach. The chain is Achaete-scute homolog 1 from Mus musculus (Mouse).